Here is a 182-residue protein sequence, read N- to C-terminus: Methyl-CpG-binding domain-containing protein 5 (182 aa).

Disordered regions lie at residues 1 to 56 and 80 to 126; these read MSNG…GTVD and HGTP…KPLN. Positions 25–101 constitute an MBD domain; the sequence is KRATPGDDNW…ENGDSHSEHS (77 aa). The span at 92–105 shows a compositional bias: basic and acidic residues; that stretch reads ENGDSHSEHSEGRG. The segment covering 106–115 has biased composition (basic residues); it reads SARRQTKSNK.

In terms of assembly, homodimer and heterodimer with MBD6. Interacts with DDM1 via its MBD domain. In terms of tissue distribution, mostly expressed in flowers, and, to a lower extent, in seedlings, buds, stems and mature seeds, but barely in roots, exclusively in root meristem cells at tips (at protein level).

The protein resides in the nucleus. The protein localises to the chromosome. Functionally, transcriptional regulator that binds CpG islands in promoters where the DNA is methylated at position 5 of cytosine within CpG dinucleotides. In addition, binds specifically methylated m(5)CpNpN but not m(5)CpNpG (N is A, T or C). Plays probably a role in gene silencing. The protein is Methyl-CpG-binding domain-containing protein 5 (MBD5) of Arabidopsis thaliana (Mouse-ear cress).